Consider the following 50-residue polypeptide: MQTLSSAPDPAVSVAVTILAVLLALTGFGLWTAFGPKATKLTDPWDDHDD.

Residues 14-34 (VAVTILAVLLALTGFGLWTAF) form a helical membrane-spanning segment.

This sequence belongs to the PsbN family.

The protein localises to the cellular thylakoid membrane. May play a role in photosystem I and II biogenesis. The chain is Protein PsbN from Prochlorococcus marinus (strain MIT 9515).